Here is a 479-residue protein sequence, read N- to C-terminus: Ribosomal RNA small subunit methyltransferase F (479 aa).

S-adenosyl-L-methionine is bound by residues 125–131 (AAAPGSK), E149, D176, and D194. The Nucleophile role is filled by C247.

Belongs to the class I-like SAM-binding methyltransferase superfamily. RsmB/NOP family.

It localises to the cytoplasm. The enzyme catalyses cytidine(1407) in 16S rRNA + S-adenosyl-L-methionine = 5-methylcytidine(1407) in 16S rRNA + S-adenosyl-L-homocysteine + H(+). Its function is as follows. Specifically methylates the cytosine at position 1407 (m5C1407) of 16S rRNA. The sequence is that of Ribosomal RNA small subunit methyltransferase F from Citrobacter koseri (strain ATCC BAA-895 / CDC 4225-83 / SGSC4696).